Here is a 125-residue protein sequence, read N- to C-terminus: Phosphoribosyl-AMP cyclohydrolase (125 aa).

A Mg(2+)-binding site is contributed by D74. C75 serves as a coordination point for Zn(2+). Residues D76 and D78 each contribute to the Mg(2+) site. The Zn(2+) site is built by C92 and C99.

Belongs to the PRA-CH family. In terms of assembly, homodimer. It depends on Mg(2+) as a cofactor. The cofactor is Zn(2+).

It is found in the cytoplasm. The enzyme catalyses 1-(5-phospho-beta-D-ribosyl)-5'-AMP + H2O = 1-(5-phospho-beta-D-ribosyl)-5-[(5-phospho-beta-D-ribosylamino)methylideneamino]imidazole-4-carboxamide. Its pathway is amino-acid biosynthesis; L-histidine biosynthesis; L-histidine from 5-phospho-alpha-D-ribose 1-diphosphate: step 3/9. Functionally, catalyzes the hydrolysis of the adenine ring of phosphoribosyl-AMP. The protein is Phosphoribosyl-AMP cyclohydrolase of Pelobacter propionicus (strain DSM 2379 / NBRC 103807 / OttBd1).